A 152-amino-acid polypeptide reads, in one-letter code: uncharacterized protein (152 aa).

This is an uncharacterized protein from Acanthamoeba polyphaga (Amoeba).